Reading from the N-terminus, the 128-residue chain is Hemoglobin subunit beta-1 (128 aa).

In terms of domain architecture, Globin spans 2-128 (HWTAEEKALV…VVDALSKGYH (127 aa)). Heme b contacts are provided by His51 and His74.

This sequence belongs to the globin family. Hb 1 is a heterotetramer of two alpha and two beta-1 chains. Red blood cells (at protein level).

Involved in oxygen transport from gills to the various peripheral tissues. The sequence is that of Hemoglobin subunit beta-1 from Somniosus microcephalus (Greenland sleeper shark).